Consider the following 54-residue polypeptide: Large ribosomal subunit protein bL33A (54 aa).

It belongs to the bacterial ribosomal protein bL33 family.

The protein is Large ribosomal subunit protein bL33A of Streptomyces avermitilis (strain ATCC 31267 / DSM 46492 / JCM 5070 / NBRC 14893 / NCIMB 12804 / NRRL 8165 / MA-4680).